An 87-amino-acid chain; its full sequence is UPF0473 protein PTH_1066 (87 aa).

Belongs to the UPF0473 family.

The protein is UPF0473 protein PTH_1066 of Pelotomaculum thermopropionicum (strain DSM 13744 / JCM 10971 / SI).